The primary structure comprises 210 residues: MPPYTIVYFPSPGRCEAMRMLLADQGQSWKEEVVTIDTWMQGLLKPTCLYGQLPKFEDGDLTLYQSNAILRHLGRSLGLYGKNQREAAQVDMVNDGVEDLRGKYGTMIYRNYENGKNDYVKALPGHLKPFETLLSQNQGGKAFIVGDQISFADYNLLDLLLIHQVLAPGCLDNFPLLSAYVARLSARPKIKAFLSSPEHVNRPINGNGKQ.

The region spanning 2 to 81 (PPYTIVYFPS…HLGRSLGLYG (80 aa)) is the GST N-terminal domain. Glutathione is bound by residues Tyr8, Arg14, Trp39, Lys45, 52–53 (QL), and 65–66 (QS). One can recognise a GST C-terminal domain in the interval 83-204 (NQREAAQVDM…SSPEHVNRPI (122 aa)).

It belongs to the GST superfamily. Pi family. In terms of assembly, homodimer. Selectively expressed in gall bladder, colon, heart, and skeletal muscle.

It carries out the reaction RX + glutathione = an S-substituted glutathione + a halide anion + H(+). Its function is as follows. Conjugation of reduced glutathione to a wide number of exogenous and endogenous hydrophobic electrophiles. Cannot metabolize 1-chloro-2,4-dinitrobenzene. The chain is Glutathione S-transferase P 2 (Gstp2) from Mus musculus (Mouse).